A 286-amino-acid chain; its full sequence is Short-chain dehydrogenase fogD (286 aa).

Positions 8, 34, 55, 147, 151, 180, and 182 each coordinate NADP(+). Tyr147 serves as the catalytic Proton acceptor. Lys151 acts as the Lowers pKa of active site Tyr in catalysis.

Belongs to the short-chain dehydrogenases/reductases (SDR) family.

It functions in the pathway secondary metabolite biosynthesis. Functionally, short-chain dehydrogenase; part of the gene cluster that mediates the biosynthesis of flavoglaucin and congeners (including aspergin, dihydroauroglaucin and auroglaucin), prenylated salicylaldehyde derivatives carrying a saturated or an unsaturated C-7 side chain. The PKS fogA releases the carboxylic acid (8E,10E,12E)-3,5,7-trihydroxytetradeca-8,10,12-trienoic acid as its product, as well as derivatives with one and two double bonds. FogA is indeed able to reduce the initial triketide, thus being at least partially responsible for the differently saturated heptyl side chains of flavoglaucin congeners. The oxidoreductases fogB, fogC and fogD modify the nascent polyketide in fogA-bound form and, together, fogA, fogB, fogC and fogD are necessary for the formation of the aromatic core and the cyclized PKS products are released as salicyl alcohols. In particular, fogB is responsible for oxidation of a hydroxyl group or reduction of remaining double bond(s) at the C-7 residue whereas fogD is probably involved in the reductive release of the modified PKS products. The cytochrome P450 monooxygenase fogE is then responsible for the hydroxylation at C-3 of the benzene ring. The fogE products are substrates of the prenyltransferase fogH and the prenylated benzyl alcohols are subsequently oxidized by the fogF to produce the final aryl aldehydes flavoglaucin and congeners. The short-chain dehydrogenase fogG does not seem to be involved in the biosynthesis of the prenylated salicylaldehyde derivatives. This is Short-chain dehydrogenase fogD from Aspergillus ruber (strain CBS 135680).